A 102-amino-acid polypeptide reads, in one-letter code: CRISPR-associated endoribonuclease Cas2 (102 aa).

Aspartate 8 contributes to the Mg(2+) binding site.

It belongs to the CRISPR-associated endoribonuclease Cas2 protein family. In terms of assembly, homodimer, forms a heterotetramer with a Cas1 homodimer. Mg(2+) is required as a cofactor.

In terms of biological role, CRISPR (clustered regularly interspaced short palindromic repeat), is an adaptive immune system that provides protection against mobile genetic elements (viruses, transposable elements and conjugative plasmids). CRISPR clusters contain sequences complementary to antecedent mobile elements and target invading nucleic acids. CRISPR clusters are transcribed and processed into CRISPR RNA (crRNA). Functions as a ssRNA-specific endoribonuclease. Involved in the integration of spacer DNA into the CRISPR cassette. This Acidovorax ebreus (strain TPSY) (Diaphorobacter sp. (strain TPSY)) protein is CRISPR-associated endoribonuclease Cas2.